The following is a 552-amino-acid chain: Non-structural protein NS1 (552 aa).

It belongs to the orbivirus non-structural protein NS1 family.

The polypeptide is Non-structural protein NS1 (Segment-5) (Bluetongue virus 13 (isolate USA) (BTV 13)).